A 237-amino-acid polypeptide reads, in one-letter code: 3-oxoacyl-[acyl-carrier-protein] reductase (237 aa).

An N-acetylmethionine modification is found at Met1. NADP(+) contacts are provided by residues 11 to 14 (SRGI), 34 to 35 (RN), Asp56, and 83 to 85 (AAG). Ser135 provides a ligand contact to substrate. NADP(+) is bound by residues Tyr148, Lys152, and 181-183 (IHT). Tyr148 acts as the Proton acceptor in catalysis. N6-acetyllysine is present on Lys195.

Belongs to the short-chain dehydrogenases/reductases (SDR) family. As to quaternary structure, homotetramer (in vitro). Heterotetramer with HSD17B8; contains two molecules each of HSD17B8 and CBR4. Does not form homotetramers when HSD17B8 is coexpressed, only heterotetramers (in vitro).

The protein localises to the mitochondrion matrix. The enzyme catalyses a (3R)-hydroxyacyl-[ACP] + NADP(+) = a 3-oxoacyl-[ACP] + NADPH + H(+). The catalysed reaction is a quinone + NADPH + H(+) = a quinol + NADP(+). It functions in the pathway lipid metabolism; fatty acid biosynthesis. Component of the heterotetramer complex KAR (3-ketoacyl-[acyl carrier protein] reductase or 3-ketoacyl-[ACP] reductase) that forms part of the mitochondrial fatty acid synthase (mtFAS). Beta-subunit of the KAR heterotetramer complex, responsible for the 3-ketoacyl-ACP reductase activity of the mtFAS, reduces 3-oxoacyl-[ACP] to (3R)-hydroxyacyl-[ACP] in a NADPH-dependent manner with no chain length preference, thereby participating in mitochondrial fatty acid biosynthesis. The homotetramer has NADPH-dependent quinone reductase activity (in vitro), hence could play a role in protection against cytotoxicity of exogenous quinones. As a heterotetramer, it can also reduce 9,10-phenanthrenequinone, 1,4-benzoquinone and various other o-quinones and p-quinones (in vitro). This chain is 3-oxoacyl-[acyl-carrier-protein] reductase (CBR4), found in Bos taurus (Bovine).